The sequence spans 271 residues: Formamidopyrimidine-DNA glycosylase (271 aa).

The Schiff-base intermediate with DNA role is filled by Pro2. The active-site Proton donor is Glu3. Catalysis depends on Lys58, which acts as the Proton donor; for beta-elimination activity. DNA-binding residues include His92, Arg111, and Lys152. An FPG-type zinc finger spans residues 237-271; it reads YVYGKVQKPCKICNNIITLIRQNGRSTYFCNACQN. Catalysis depends on Arg261, which acts as the Proton donor; for delta-elimination activity.

This sequence belongs to the FPG family. Monomer. Requires Zn(2+) as cofactor.

It catalyses the reaction Hydrolysis of DNA containing ring-opened 7-methylguanine residues, releasing 2,6-diamino-4-hydroxy-5-(N-methyl)formamidopyrimidine.. It carries out the reaction 2'-deoxyribonucleotide-(2'-deoxyribose 5'-phosphate)-2'-deoxyribonucleotide-DNA = a 3'-end 2'-deoxyribonucleotide-(2,3-dehydro-2,3-deoxyribose 5'-phosphate)-DNA + a 5'-end 5'-phospho-2'-deoxyribonucleoside-DNA + H(+). Involved in base excision repair of DNA damaged by oxidation or by mutagenic agents. Acts as a DNA glycosylase that recognizes and removes damaged bases. Has a preference for oxidized purines, such as 7,8-dihydro-8-oxoguanine (8-oxoG). Has AP (apurinic/apyrimidinic) lyase activity and introduces nicks in the DNA strand. Cleaves the DNA backbone by beta-delta elimination to generate a single-strand break at the site of the removed base with both 3'- and 5'-phosphates. This chain is Formamidopyrimidine-DNA glycosylase, found in Wolbachia pipientis wMel.